The sequence spans 917 residues: Spermatogenesis-associated protein 31D3 (917 aa).

The chain crosses the membrane as a helical span at residues 29–49 (FICLSGLGLFILYLFYMVLTL). 3 disordered regions span residues 55–80 (EKNN…KDRK), 152–195 (SVSP…PPPL), and 773–797 (SQET…LRSN). Residues 63–74 (HQGRARRKRKSV) show a composition bias toward basic residues. Residues 152 to 163 (SVSPLASSASGA) show a composition bias toward low complexity. Over residues 164-177 (ESSFTLASTPSATT) the composition is skewed to polar residues. The segment covering 782–797 (LLHDPETSSEEDLRSN) has biased composition (basic and acidic residues).

It belongs to the SPATA31 family.

The protein resides in the membrane. Its function is as follows. May play a role in spermatogenesis. This is Spermatogenesis-associated protein 31D3 (SPATA31D3) from Homo sapiens (Human).